The chain runs to 684 residues: MLDKLNQPKGSTIGVLKDGRTIQEAFDSLGYLGVAVLSPANYGAKGDGKADDTIPLRQCVQDACALGGRVVGTVGAEYKISGTIAGTVGDGKYVELDFTGSKFVPTTDDAVMTITGVATSPVAEVTVEVVSVNLGNGSTNTIAMKVTAPGGHSFTKKGEIGKAWSPVLCLNNDLSTQYAGEPFVVGLVESSTVFYTTSVFTELYMGTSLKVIRVPTTQVVVKGLDVESEWTTGWKASTLTLSGLLRPFVYKPKCKNINGPFVNLTGCYGATVFLPEGDNLRNAPSEGAYGYFVNDSASFGSTIYGINCTNARHAYTTSSPRSEPTDDKWWLKGRTLFSEITNGLGTGCHNAFDTHSPSYGIKFTNCRAVGDFRGVDTGGAGFQIRGDRSSLVDCTAINSKIGAAFTAVNISGNSELYISGFTYEGPAGHLALSLSGKAGQINRVTISDSRWKTLEQYATAITNVEVSASNVEAVVDSATTASAAWRIGEGATLRTRGGAARFSAGSGHSVISLAASGAKVDVGDLEVTGSSFMQYLLATLSQYAGDVYIEADLDGALPGNPVGGGGTDLKAAVVYTAGNKFRRPLAYRALTIGNANGNTLGLNYSGHDVITWEITATVAGANVNGITPGAFIGQQLNIGSSPASTQQLIIKNGTNIAMGHAVTLEAGRGVTLYWNGANWRSGSV.

The protein in the N-terminal section; belongs to the Przondovirus depolymerase 2 family. Homotrimer. Interacts (via N-terminus) with depolymerase 1 (via N-terminus); this interaction probably gives rise to a branched tailspike.

It is found in the virion. In terms of biological role, functions as a receptor binding protein (RBP) and probably mediates the attachment to the host capsular exopolysaccharides. Displays a depolymerase activity that specifically degrades the K5-type polysaccharides of Klebsiella pneumoniae capsule, which allows the phage to reach the host cell membrane and bind the entry receptor. This chain is Depolymerase 2, capsule K5-specific, found in Klebsiella phage K5-4 (Bacteriophage K5-4).